A 116-amino-acid polypeptide reads, in one-letter code: uncharacterized protein (116 aa).

The protein belongs to the mimivirus L15/L51/R83 family.

This is an uncharacterized protein from Acanthamoeba polyphaga mimivirus (APMV).